A 1185-amino-acid chain; its full sequence is AT-rich interactive domain-containing protein 5B (1185 aa).

5 disordered regions span residues 248–281 (PNLK…ESKA), 413–550 (KGEE…PDED), 713–742 (ISKK…PIAI), 883–932 (HQQE…EGKG), and 1033–1058 (HLPK…LHGL). Residues 252–261 (GRPRKKKPCP) show a composition bias toward basic residues. The ARID domain maps to 321–413 (RADEQAFLVA…LILPYERFIK (93 aa)). Over residues 447–461 (IKNENQKSKKEKDNA) the composition is skewed to basic and acidic residues. Residues 462–471 (QKPQDASEVS) show a composition bias toward polar residues. The segment covering 473-487 (EQEKDQESADQKNFT) has biased composition (basic and acidic residues). A compositionally biased stretch (basic and acidic residues) spans 1034–1053 (LPKETSVKEKVPDAEGEGSK).

It belongs to the ARID5B family.

It is found in the nucleus. In terms of biological role, transcription coactivator that binds to the 5'-AATA[CT]-3' core sequence and plays a key role in adipogenesis and liver development. Required for adipogenesis: regulates triglyceride metabolism in adipocytes by regulating expression of adipogenic genes. This Gallus gallus (Chicken) protein is AT-rich interactive domain-containing protein 5B (ARID5B).